A 306-amino-acid chain; its full sequence is Porphobilinogen deaminase (306 aa).

Position 234 is an S-(dipyrrolylmethanemethyl)cysteine (Cys234).

The protein belongs to the HMBS family. Monomer. It depends on dipyrromethane as a cofactor.

It catalyses the reaction 4 porphobilinogen + H2O = hydroxymethylbilane + 4 NH4(+). Its pathway is porphyrin-containing compound metabolism; protoporphyrin-IX biosynthesis; coproporphyrinogen-III from 5-aminolevulinate: step 2/4. In terms of biological role, tetrapolymerization of the monopyrrole PBG into the hydroxymethylbilane pre-uroporphyrinogen in several discrete steps. This chain is Porphobilinogen deaminase, found in Mycobacteroides abscessus (strain ATCC 19977 / DSM 44196 / CCUG 20993 / CIP 104536 / JCM 13569 / NCTC 13031 / TMC 1543 / L948) (Mycobacterium abscessus).